The chain runs to 155 residues: Small ribosomal subunit protein eS19 (155 aa).

It belongs to the eukaryotic ribosomal protein eS19 family. As to quaternary structure, component of the small ribosomal subunit.

The protein localises to the cytoplasm. In terms of biological role, component of the small ribosomal subunit. The ribosome is a large ribonucleoprotein complex responsible for the synthesis of proteins in the cell. Required for proper maturation of the small (40S) ribosomal subunit. In Entamoeba histolytica (strain ATCC 30459 / HM-1:IMSS / ABRM), this protein is Small ribosomal subunit protein eS19 (RPS19).